A 557-amino-acid polypeptide reads, in one-letter code: Inositol-3-phosphate synthase 1 (557 aa).

NAD(+) is bound by residues Gly-67, Gly-68, Asn-69, Asn-70, Asp-141, Ser-177, Val-178, Gln-188, Arg-191, Thr-228, Ala-229, Asn-230, Thr-231, Gly-278, Ser-279, Asp-303, Ser-306, Asn-337, Asn-338, Asp-339, and Lys-352. Ser-279 is subject to Phosphoserine. Ser-357 is modified (phosphoserine). NAD(+)-binding residues include Gly-390, Asp-391, Asp-419, and Ser-420. The interval 512–557 (GPGIKPGEVVATSPLPCKKEPTPATNGCTGDANGHPQAPTPKLSTA) is disordered. Ser-524 bears the Phosphoserine mark.

Belongs to the myo-inositol 1-phosphate synthase family. NAD(+) is required as a cofactor. In testis, it is expressed in Sertoli cells. Highly expressed in 2 types of germ cells, pachytene spermatocytes and round spermatids.

The protein localises to the cytoplasm. The enzyme catalyses D-glucose 6-phosphate = 1D-myo-inositol 3-phosphate. The protein operates within polyol metabolism; myo-inositol biosynthesis; myo-inositol from D-glucose 6-phosphate: step 1/2. Its function is as follows. Key enzyme in myo-inositol biosynthesis pathway that catalyzes the conversion of glucose 6-phosphate to 1-myo-inositol 1-phosphate in a NAD-dependent manner. Rate-limiting enzyme in the synthesis of all inositol-containing compounds. This Mus musculus (Mouse) protein is Inositol-3-phosphate synthase 1 (Isyna1).